The chain runs to 89 residues: Large ribosomal subunit protein bL27 (89 aa).

Residues 1–26 form a disordered region; that stretch reads MATKKAGGSSKNGRDSAGRRLGLKKS.

This sequence belongs to the bacterial ribosomal protein bL27 family.

This chain is Large ribosomal subunit protein bL27, found in Orientia tsutsugamushi (strain Ikeda) (Rickettsia tsutsugamushi).